The primary structure comprises 401 residues: S-adenosylmethionine synthase (401 aa).

ATP is bound at residue 137 to 142 (GQGSGD).

The protein belongs to the AdoMet synthase 2 family. Mg(2+) is required as a cofactor.

It catalyses the reaction L-methionine + ATP + H2O = S-adenosyl-L-methionine + phosphate + diphosphate. The protein operates within amino-acid biosynthesis; S-adenosyl-L-methionine biosynthesis; S-adenosyl-L-methionine from L-methionine: step 1/1. In terms of biological role, catalyzes the formation of S-adenosylmethionine from methionine and ATP. This is S-adenosylmethionine synthase from Haloquadratum walsbyi (strain DSM 16790 / HBSQ001).